A 663-amino-acid polypeptide reads, in one-letter code: Shugoshin 1 (663 aa).

Coiled-coil stretches lie at residues 8-29 (KQAF…RIKK) and 110-132 (DTAE…NLLE). 3 disordered regions span residues 207-250 (RNTA…MNKN), 278-401 (EHTV…LNSG), and 417-478 (FRQN…ARKN). Composition is skewed to basic and acidic residues over residues 231–242 (RLEECNNEDKTE), 280–304 (TVVE…REID), 339–358 (KNKE…KAER), and 366–394 (KPWE…KEKM). Low complexity predominate over residues 427–437 (NESSLEISSSE). The span at 443–453 (SLYKPYKDKSK) shows a compositional bias: basic and acidic residues.

It belongs to the shugoshin family. In terms of assembly, binds microtubules. In terms of processing, ubiquitinated by the anaphase promoting complex (APC) at the onset of anaphase, conducting to its degradation.

Its subcellular location is the nucleus. It is found in the chromosome. The protein localises to the centromere. The protein resides in the kinetochore. It localises to the nucleus speckle. Functionally, plays a central role in chromosome cohesion during mitosis by preventing premature dissociation of cohesin complex from centromeres after prophase, when most of cohesin complex dissociates from chromosomes arms. May act by preventing phosphorylation of the stag2 subunit of cohesin complex at the centromere, ensuring cohesin persistence at centromere until cohesin cleavage by espl1/separase at anaphase. May regulate kinetochore microtubule stability in mitosis, possibly to sense tension on mitotic chromosomes. The sequence is that of Shugoshin 1 from Xenopus laevis (African clawed frog).